We begin with the raw amino-acid sequence, 730 residues long: Propionyl-CoA carboxylase alpha chain, mitochondrial (730 aa).

The N-terminal 52 residues, 1 to 52, are a transit peptide targeting the mitochondrion; sequence MAGLWVGGSVLVAAGRRGSRSPRPLMRSVALWTLKHVPQYSRQRLLVSRSLC. Positions 62–509 constitute a Biotin carboxylation domain; that stretch reads TFDKILIANR…NTKFLSDVYP (448 aa). K65 is modified (N6-acetyllysine; alternate). K65 is modified (N6-succinyllysine; alternate). K119 is subject to N6-succinyllysine. K150 is subject to N6-acetyllysine; alternate. The residue at position 150 (K150) is an N6-succinyllysine; alternate. K154 carries the post-translational modification N6-acetyllysine. K177 is an ATP binding site. The ATP-grasp domain maps to 181-378; sequence KLLAKKAKVN…LVQEMIRVAK (198 aa). K188 is subject to N6-succinyllysine. Position 200 is an N6-acetyllysine; alternate (K200). The residue at position 200 (K200) is an N6-succinyllysine; alternate. Residues 209 to 270, E261, and N296 each bind ATP; that span reads AREI…PRHI. Position 252 is a phosphoserine (S252). K262 is subject to N6-succinyllysine. Positions 336, 349, and 351 each coordinate Mg(2+). Mn(2+)-binding residues include E336, E349, and N351. E349 is an active-site residue. Residue K407 is modified to N6-succinyllysine. F409 is a biotin binding site. N6-succinyllysine occurs at positions 502, 513, and 650. The Biotinyl-binding domain occupies 655–730; sequence KAAEDTSSIL…GEGDLLVELE (76 aa). At K696 the chain carries N6-biotinyllysine.

The holoenzyme is a dodecamer composed of 6 PCCA/alpha subunits and 6 PCCB/beta subunits. Interacts (via the biotin carboxylation domain) with SIRT4. Interacts with SIRT3 and SIRT5. It depends on Mg(2+) as a cofactor. Mn(2+) is required as a cofactor. Requires biotin as cofactor. In terms of processing, acetylated. Post-translationally, the biotin cofactor is covalently attached to the C-terminal biotinyl-binding domain and is required for the catalytic activity. Biotinylation is catalyzed by HLCS.

It localises to the mitochondrion matrix. It catalyses the reaction propanoyl-CoA + hydrogencarbonate + ATP = (S)-methylmalonyl-CoA + ADP + phosphate + H(+). It carries out the reaction butanoyl-CoA + hydrogencarbonate + ATP = (2S)-ethylmalonyl-CoA + ADP + phosphate + H(+). It participates in metabolic intermediate metabolism; propanoyl-CoA degradation; succinyl-CoA from propanoyl-CoA: step 1/3. In terms of biological role, this is one of the 2 subunits of the biotin-dependent propionyl-CoA carboxylase (PCC), a mitochondrial enzyme involved in the catabolism of odd chain fatty acids, branched-chain amino acids isoleucine, threonine, methionine, and valine and other metabolites. Propionyl-CoA carboxylase catalyzes the carboxylation of propionyl-CoA/propanoyl-CoA to D-methylmalonyl-CoA/(S)-methylmalonyl-CoA. Within the holoenzyme, the alpha subunit catalyzes the ATP-dependent carboxylation of the biotin carried by the biotin carboxyl carrier (BCC) domain, while the beta subunit then tranfers the carboxyl group from carboxylated biotin to propionyl-CoA. Propionyl-CoA carboxylase also significantly acts on butyryl-CoA/butanoyl-CoA, which is converted to ethylmalonyl-CoA/(2S)-ethylmalonyl-CoA at a much lower rate. Other alternative minor substrates include (2E)-butenoyl-CoA/crotonoyl-CoA. The chain is Propionyl-CoA carboxylase alpha chain, mitochondrial from Sus scrofa (Pig).